We begin with the raw amino-acid sequence, 481 residues long: UDP-glycosyltransferase 72E3 (481 aa).

His-18 acts as the Proton acceptor in catalysis. His-18 serves as a coordination point for an anthocyanidin. Asp-111 acts as the Charge relay in catalysis. 6 residues coordinate UDP-alpha-D-glucose: Ala-346, Gln-348, His-363, Trp-366, Ser-368, and Glu-371. An anthocyanidin is bound at residue Ala-386. Positions 387 and 388 each coordinate UDP-alpha-D-glucose.

It belongs to the UDP-glycosyltransferase family. In terms of tissue distribution, expressed in seedlings and roots, and at lower levels in flowers and siliques.

It carries out the reaction (E)-4-coumarate + UDP-alpha-D-glucose = 4-O-(beta-D-glucosyl)-trans-4-coumarate + UDP + H(+). It catalyses the reaction (E)-sinapyl alcohol + UDP-alpha-D-glucose = 4-O-(beta-D-glucosyl)-trans-4-sinapoyl alcohol + UDP + H(+). The catalysed reaction is (E)-coniferol + UDP-alpha-D-glucose = 4-O-(beta-D-glucosyl)-(E)-coniferol + UDP + H(+). The enzyme catalyses (E)-sinapate + UDP-alpha-D-glucose = 4-O-(beta-D-glucosyl)-trans-sinapate + UDP + H(+). It carries out the reaction (E)-coniferaldehyde + UDP-alpha-D-glucose = 4-O-(beta-D-glucosyl)-4-(E)-coniferyl aldehyde + UDP + H(+). It catalyses the reaction (E)-sinapaldehyde + UDP-alpha-D-glucose = 4-O-(beta-D-glucosyl)-4-trans-sinapoyl aldehyde + UDP + H(+). Its function is as follows. Involved in the O-glucosylation of monolignols (alcohol monomers of lignin). Glucosylates coniferyl alcohol to form coniferyl alcohol 4-O-glucoside. Glucosylates sinapyl alcohol to form sinapyl alcohol 4-O-glucoside. Possesses low activity with sinapate as substrate. The sequence is that of UDP-glycosyltransferase 72E3 from Arabidopsis thaliana (Mouse-ear cress).